The sequence spans 783 residues: Rabenosyn-5 (783 aa).

A2 is subject to N-acetylalanine. S3 is modified (phosphoserine). Residues 14–37 (FLCPLCLKDLQSFYQLQSHYEEEH) form a C2H2-type zinc finger. The necessary for the correct targeting to endosomes stretch occupies residues 99–262 (RSHLSDFKKH…HCKDKLLKRE (164 aa)). The FYVE-type zinc finger occupies 156–259 (DQDVPFCPDC…CCTHCKDKLL (104 aa)). Zn(2+) contacts are provided by C162, C165, C178, C181, C186, and C189. Residues 206–223 (KDSLSTHTSPSQSPNSVH) are compositionally biased toward polar residues. The interval 206–240 (KDSLSTHTSPSQSPNSVHGSRRGSISSMSSVSSVL) is disordered. 4 positions are modified to phosphoserine: S214, S218, S225, and S229. Residues 227 to 239 (RGSISSMSSVSSV) are compositionally biased toward low complexity. Zn(2+) contacts are provided by C251 and C254. Residues 263–499 (QQMDEKEHTP…QLQDEYDQQQ (237 aa)) form a necessary for interaction with RAB4A region. The interval 263–783 (QQMDEKEHTP…TLAKQKGAPN (521 aa)) is necessary for interaction with EHD1. 2 coiled-coil regions span residues 377–412 (TKEQ…KLEE) and 471–531 (QAKA…ELER). 2 stretches are compositionally biased toward basic and acidic residues: residues 387–399 (KRKQ…RTVE) and 405–414 (ESRRKLEERQ). Residues 387 to 433 (KRKQDLEQKRTVERQAALESRRKLEERQSGLASHTANGDVRSLRGIP) are disordered. Positions 495 to 514 (YDQQQTEKAIELSRKQAEEE) constitute a UIM domain. Disordered stretches follow at residues 569 to 638 (SYSL…SPTE) and 663 to 733 (FEED…EEHI). Polar residues-rich tracts occupy residues 571–584 (SLDQ…SSTA) and 610–623 (TLPQ…SDKA). The interval 627–783 (PFDEDDLSSP…TLAKQKGAPN (157 aa)) is necessary for interaction with RAB5A. Residues 663 to 673 (FEEDAEEEEVA) are compositionally biased toward acidic residues. Position 686 is a phosphoserine (S686). Over residues 721–733 (VDSDSGMEAEEHI) the composition is skewed to acidic residues.

In terms of assembly, interacts with EHD1, RAB4A, RAB5A, RAB22A, RAB24 and VPS45. Binds simultaneously to RAB4A and RAB5A in vitro. Interacts with RAB4A and RAB5A that has been activated by GTP binding.

It localises to the cell membrane. It is found in the early endosome membrane. Its function is as follows. Rab4/Rab5 effector protein acting in early endocytic membrane fusion and membrane trafficking of recycling endosomes. Required for endosome fusion either homotypically or with clathrin coated vesicles. Plays a role in the lysosomal trafficking of CTSD/cathepsin D from the Golgi to lysosomes. Also promotes the recycling of transferrin directly from early endosomes to the plasma membrane. Binds phospholipid vesicles containing phosphatidylinositol 3-phosphate (PtdInsP3). Plays a role in the recycling of transferrin receptor to the plasma membrane. This chain is Rabenosyn-5, found in Mus musculus (Mouse).